Consider the following 149-residue polypeptide: Probable flagellum biosynthesis repressor protein FlbT (149 aa).

The protein belongs to the FlbT family.

Functionally, has a post-transcriptional repressor function in flagellum biogenesis. Associates with the 5'-UTR of fljK mRNA and promotes its degradation. The polypeptide is Probable flagellum biosynthesis repressor protein FlbT (Sinorhizobium medicae (strain WSM419) (Ensifer medicae)).